Here is a 134-residue protein sequence, read N- to C-terminus: Syncollin (134 aa).

An N-terminal signal peptide occupies residues 1–21 (MSPLRPLLLALALASVPCAQG).

In terms of assembly, monomer and homooligomer; most probably hexameric. Interacts with GP2. Contains intrachain disulfide bonds.

It is found in the zymogen granule membrane. Its subcellular location is the zymogen granule lumen. Functions in exocytosis in pancreatic acinar cells regulating the fusion of zymogen granules with each other. May have a pore-forming activity on membranes and regulate exocytosis in other exocrine tissues. This Homo sapiens (Human) protein is Syncollin (SYCN).